The sequence spans 137 residues: Large ribosomal subunit protein uL16c (137 aa).

Residues 1 to 17 (MLSPKKTRFRRQHRGRM) show a composition bias toward basic residues. Positions 1-21 (MLSPKKTRFRRQHRGRMKGLS) are disordered.

The protein belongs to the universal ribosomal protein uL16 family. As to quaternary structure, part of the 50S ribosomal subunit.

It is found in the plastid. This is Large ribosomal subunit protein uL16c from Cuscuta obtusiflora (Peruvian dodder).